The primary structure comprises 341 residues: Ketol-acid reductoisomerase (NADP(+)) (341 aa).

Residues 1–182 form the KARI N-terminal Rossmann domain; sequence MTEMFYDDDA…GGTRAGVIKT (182 aa). Residues 25-28, Lys-48, Ser-51, Ser-53, and 83-86 each bind NADP(+); these read YGSQ and DQHQ. His-108 is an active-site residue. Gly-134 is a binding site for NADP(+). The KARI C-terminal knotted domain maps to 183–328; that stretch reads TFTEETETDL…RELRGLFSWQ (146 aa). Mg(2+) contacts are provided by Asp-191, Glu-195, Glu-227, and Glu-231. Substrate is bound at residue Ser-252.

Belongs to the ketol-acid reductoisomerase family. Requires Mg(2+) as cofactor.

The enzyme catalyses (2R)-2,3-dihydroxy-3-methylbutanoate + NADP(+) = (2S)-2-acetolactate + NADPH + H(+). It carries out the reaction (2R,3R)-2,3-dihydroxy-3-methylpentanoate + NADP(+) = (S)-2-ethyl-2-hydroxy-3-oxobutanoate + NADPH + H(+). It participates in amino-acid biosynthesis; L-isoleucine biosynthesis; L-isoleucine from 2-oxobutanoate: step 2/4. The protein operates within amino-acid biosynthesis; L-valine biosynthesis; L-valine from pyruvate: step 2/4. In terms of biological role, involved in the biosynthesis of branched-chain amino acids (BCAA). Catalyzes an alkyl-migration followed by a ketol-acid reduction of (S)-2-acetolactate (S2AL) to yield (R)-2,3-dihydroxy-isovalerate. In the isomerase reaction, S2AL is rearranged via a Mg-dependent methyl migration to produce 3-hydroxy-3-methyl-2-ketobutyrate (HMKB). In the reductase reaction, this 2-ketoacid undergoes a metal-dependent reduction by NADPH to yield (R)-2,3-dihydroxy-isovalerate. This chain is Ketol-acid reductoisomerase (NADP(+)), found in Arthrobacter sp. (strain FB24).